The primary structure comprises 1442 residues: Clustered mitochondria protein homolog (1442 aa).

Disordered stretches follow at residues 38-100 and 237-258; these read NYRN…KKPD and GRSE…KDRP. Basic and acidic residues predominate over residues 82 to 100; it reads SEGEQQKDKTAAEDKKKPD. The 243-residue stretch at 394 to 636 folds into the Clu domain; the sequence is RAEDTFSSKL…RTFPPDVNFL (243 aa). Basic and acidic residues-rich tracts occupy residues 696 to 714 and 737 to 763; these read QKQE…EPKA and ESKE…KVET. 2 disordered regions span residues 696 to 763 and 949 to 984; these read QKQE…KVET and SESD…SFQC. Residues 949–958 are compositionally biased toward polar residues; the sequence is SESDALTKSG. TPR repeat units follow at residues 1087-1120, 1213-1246, and 1248-1281; these read AYNF…LNNV, ALLD…NIKY, and GEKS…EKET. Positions 1373–1442 are disordered; the sequence is RQKEGGTSEQ…SSNASAQQVS (70 aa). Residues 1380-1390 show a composition bias toward low complexity; sequence SEQAAAAQASQ. The segment covering 1424–1442 has biased composition (polar residues); the sequence is ASSSKQADNSSNASAQQVS.

Belongs to the CLU family.

It is found in the cytoplasm. MRNA-binding protein involved in proper cytoplasmic distribution of mitochondria. This chain is Clustered mitochondria protein homolog, found in Aedes aegypti (Yellowfever mosquito).